A 32-amino-acid chain; its full sequence is MSDIN-like toxin proprotein 3 (32 aa).

Residues 1–10 (MSDINATRLP) constitute a propeptide that is removed on maturation. A cross-link (cyclopeptide (Ser-Pro)) is located at residues 11–17 (SFFFPIP). The propeptide occupies 18-32 (CISDDIEMVLTRGER).

The protein belongs to the MSDIN fungal toxin family. Post-translationally, processed by the macrocyclase-peptidase enzyme POPB to yield a toxic cyclic heptapeptide. POPB first removes 10 residues from the N-terminus. Conformational trapping of the remaining peptide forces the enzyme to release this intermediate rather than proceed to macrocyclization. The enzyme rebinds the remaining peptide in a different conformation and catalyzes macrocyclization of the N-terminal 8 residues.

Its function is as follows. Probable toxin that belongs to the MSDIN-like toxin family responsible for a large number of food poisoning cases and deaths. The protein is MSDIN-like toxin proprotein 3 of Amanita phalloides (Death cap).